A 590-amino-acid polypeptide reads, in one-letter code: Multidrug resistance ABC transporter ATP-binding and permease protein (590 aa).

Transmembrane regions (helical) follow at residues 35 to 55 (YLFFVIGIVAGIIGTLIQLQV), 79 to 99 (IALYIGSAAVSAIAAIVLGIF), 150 to 170 (IPQAFTSILLLVGSIIFMLQM), 176 to 196 (LAMIIAVPIVMLIMFPIMTFG), 261 to 281 (VMMLSMMLMIFGLLAYGIYLI), and 292 to 312 (LGMMMYLMNLIGVVPTVATFF). One can recognise an ABC transmembrane type-1 domain in the interval 38 to 317 (FVIGIVAGII…VATFFTELAK (280 aa)). An ABC transporter domain is found at 349 to 584 (LSAHHVDFAY…HPLYAKYVSE (236 aa)). 382-389 (GPSGGGKS) lines the ATP pocket.

It belongs to the ABC transporter superfamily. Multidrug exporter LmrA (TC 3.A.1.117.1) family. Homodimer.

The protein localises to the cell membrane. It carries out the reaction ATP + H2O + xenobioticSide 1 = ADP + phosphate + xenobioticSide 2.. In terms of biological role, efflux transporter for a variety of amphiphilic cationic compounds, including antibiotics. The sequence is that of Multidrug resistance ABC transporter ATP-binding and permease protein (lmrA) from Lactococcus lactis subsp. cremoris (strain MG1363).